A 415-amino-acid chain; its full sequence is F-box protein At3g13820 (415 aa).

One can recognise an F-box domain in the interval 1 to 50; that stretch reads MTTMSNLPAEVLEEILSRTPVTSLRTMRSTCKKWNNLSKKKIIPEAARKQ. Disordered regions lie at residues 209-229 and 387-415; these read NDYDDQEDEEEEDDEEYEDDD and KQPKGKRKGRSSETKSNKNKKGRKIKIIG. The segment covering 210 to 229 has biased composition (acidic residues); that stretch reads DYDDQEDEEEEDDEEYEDDD. Residues 403-415 are compositionally biased toward basic residues; sequence NKNKKGRKIKIIG.

The protein is F-box protein At3g13820 of Arabidopsis thaliana (Mouse-ear cress).